Here is an 82-residue protein sequence, read N- to C-terminus: Ferredoxin (82 aa).

Residues 3–31 (KYTIVDKDTCIACGACGAAAPDIYDYDDE) enclose the 4Fe-4S ferredoxin-type domain. [4Fe-4S] cluster contacts are provided by cysteine 12, cysteine 15, cysteine 18, and cysteine 62.

It depends on [4Fe-4S] cluster as a cofactor.

Ferredoxins are iron-sulfur proteins that transfer electrons in a wide variety of metabolic reactions. This ferredoxin may act as a phosphodonor to cytochrome P450 BioI. This Bacillus subtilis (strain 168) protein is Ferredoxin (fer).